Here is a 408-residue protein sequence, read N- to C-terminus: CinA-like protein (408 aa).

It belongs to the CinA family.

The sequence is that of CinA-like protein from Thermotoga neapolitana (strain ATCC 49049 / DSM 4359 / NBRC 107923 / NS-E).